The sequence spans 515 residues: 1-pyrroline-5-carboxylate dehydrogenase (515 aa).

Catalysis depends on residues E286 and C320.

Belongs to the aldehyde dehydrogenase family. RocA subfamily.

The enzyme catalyses L-glutamate 5-semialdehyde + NAD(+) + H2O = L-glutamate + NADH + 2 H(+). It functions in the pathway amino-acid degradation; L-proline degradation into L-glutamate; L-glutamate from L-proline: step 2/2. In Bacillus anthracis (strain A0248), this protein is 1-pyrroline-5-carboxylate dehydrogenase.